A 625-amino-acid polypeptide reads, in one-letter code: Probable potassium transport system protein Kup 2 (625 aa).

The next 12 membrane-spanning stretches (helical) occupy residues 10 to 30 (LAAL…TSPL), 47 to 67 (GVHL…VVTL), 104 to 124 (VLLL…VITP), 140 to 160 (PAFK…LFAV), 172 to 192 (FGPV…AEII), 214 to 234 (GWHM…VEAL), 250 to 270 (WLGL…ALLM), 283 to 303 (LFPQ…TVIA), 347 to 367 (WLLL…SALA), 369 to 389 (AYGI…FFVV), 396 to 416 (PLPV…LLVV), and 422 to 442 (FFQG…VMAT).

The protein belongs to the HAK/KUP transporter (TC 2.A.72) family.

The protein localises to the cell inner membrane. The catalysed reaction is K(+)(in) + H(+)(in) = K(+)(out) + H(+)(out). Its function is as follows. Transport of potassium into the cell. Likely operates as a K(+):H(+) symporter. The protein is Probable potassium transport system protein Kup 2 of Albidiferax ferrireducens (strain ATCC BAA-621 / DSM 15236 / T118) (Rhodoferax ferrireducens).